The chain runs to 309 residues: tRNA uridine(34) hydroxylase (309 aa).

Residues 130 to 224 (SDPDTIVIDT…YLEEVPQEES (95 aa)) form the Rhodanese domain. Cysteine 184 functions as the Cysteine persulfide intermediate in the catalytic mechanism.

This sequence belongs to the TrhO family.

It catalyses the reaction uridine(34) in tRNA + AH2 + O2 = 5-hydroxyuridine(34) in tRNA + A + H2O. Its function is as follows. Catalyzes oxygen-dependent 5-hydroxyuridine (ho5U) modification at position 34 in tRNAs. In Rhizobium johnstonii (strain DSM 114642 / LMG 32736 / 3841) (Rhizobium leguminosarum bv. viciae), this protein is tRNA uridine(34) hydroxylase.